The chain runs to 429 residues: C4-dicarboxylate transport protein (429 aa).

8 helical membrane passes run 9–29 (VLYVQVIFAIIVGVILGHYYP), 45–65 (LIKMVIGPIIFCTVVTGIAGM), 79–99 (LLYFEIVSTFALLLGLAATHI), 149–169 (GEILQILLIALLFGSVLAHLG), 185–205 (VLFGIVHIVTKLAPIGAFGAM), 223–243 (LIGTFYLTSVVFVLVVLGTIA), 308–328 (IYMTMAVLFIAQATNIELTWM), and 356–376 (AATLAVVPTIPLSGMVLILGI).

This sequence belongs to the dicarboxylate/amino acid:cation symporter (DAACS) (TC 2.A.23) family.

Its subcellular location is the cell inner membrane. In terms of biological role, responsible for the transport of dicarboxylates such as succinate, fumarate, and malate from the periplasm across the membrane. This chain is C4-dicarboxylate transport protein, found in Burkholderia lata (strain ATCC 17760 / DSM 23089 / LMG 22485 / NCIMB 9086 / R18194 / 383).